The sequence spans 166 residues: Glycine-rich RNA-binding protein GRP1A (166 aa).

One can recognise an RRM domain in the interval 8–86; it reads YRCFVGGLAW…RSITVNEAQS (79 aa). A disordered region spans residues 68–166; that stretch reads GMNGQDLDGR…YGGSGGGGGW (99 aa). Gly residues-rich tracts occupy residues 88–146 and 153–166; these read GSGG…YGGG and EGGG…GGGW.

As to expression, predominantly expressed in meristematic and growing tissue.

Its subcellular location is the nucleus. Its function is as follows. May play a general role in circadian phenomena associated with meristematic tissue. The protein is Glycine-rich RNA-binding protein GRP1A of Sinapis alba (White mustard).